We begin with the raw amino-acid sequence, 120 residues long: rRNA-processing protein CGR1 (120 aa).

Disordered regions lie at residues 1–26 and 81–120; these read MVNETGESQKAAKGTPVSGKVWKAEK and ERREKKEENERYERLAAKMHAKKVERMRRREKRNKALKER. Residues 47-106 adopt a coiled-coil conformation; the sequence is KKQKRLEDKQFKERLKALKDEKEEARQAKITMLKERREKKEENERYERLAAKMHAKKVER. Positions 81-96 are enriched in basic and acidic residues; sequence ERREKKEENERYERLA. Basic residues predominate over residues 97–113; that stretch reads AKMHAKKVERMRRREKR.

Belongs to the CGR1 family.

It is found in the nucleus. The protein localises to the nucleolus. Its function is as follows. Involved in nucleolar integrity and required for processing of the pre-rRNA for the 60S ribosome subunit. The polypeptide is rRNA-processing protein CGR1 (CGR1) (Saccharomyces cerevisiae (strain ATCC 204508 / S288c) (Baker's yeast)).